The primary structure comprises 378 residues: MDIPPLAGRTVAMSFCALPVSYLLNQVSAFSQPLFVVLTSALILGLLFLAVYSLSHGEITYDPLYAVFVIFSFTSVVDLVIALQEDGYMMGFMDFYTKEGEPYLRTAHGIFICYWDGTVHYLLYLTMAGAIRKRKRYRNLGLYWLGSFAMSILVFLPGNILGKYSSEMRPTFFLAILYMLVPCWAGVRIFNQSRAPTSYTPDMVQEEQKKSLLQRPADLALIVYLIFAALFTVFRGLVVLDCPTDACFIYIYQYEPYLRDPVAYPKLQMLMYLFYALPFYCLAAYALAFPGCSWLPDWALVFAGAIGQAQFSHMGASMHMRTPFTYRVPEDTWATFFLSNLLLALGPHLLAFRCLWRPAFFLHAALPSSPQDQDKKQQ.

10 consecutive transmembrane segments (helical) span residues 10–30, 34–54, 63–83, 110–130, 140–160, 170–190, 219–239, 269–289, 291–311, and 332–352; these read TVAMSFCALPVSYLLNQVSAF, LFVVLTSALILGLLFLAVYSL, PLYAVFVIFSFTSVVDLVIAL, IFICYWDGTVHYLLYLTMAGA, LGLYWLGSFAMSILVFLPGNI, PTFFLAILYMLVPCWAGVRIF, LALIVYLIFAALFTVFRGLVV, MLMYLFYALPFYCLAAYALAF, GCSWLPDWALVFAGAIGQAQF, and TWATFFLSNLLLALGPHLLAF. EXPERA domains lie at 61–186 and 217–351; these read YDPL…CWAG and ADLA…HLLA.

Belongs to the TM6SF family. In terms of tissue distribution, highly expressed in the liver at both the mRNA and protein levels.

The protein localises to the endoplasmic reticulum membrane. Its subcellular location is the endoplasmic reticulum-Golgi intermediate compartment membrane. Functionally, regulator of liver fat metabolism influencing triglyceride secretion and hepatic lipid droplet content. May function as sterol isomerase. The polypeptide is Transmembrane 6 superfamily member 2 (Tm6sf2) (Mus musculus (Mouse)).